A 422-amino-acid polypeptide reads, in one-letter code: Hispidin-3-hydroxylase (422 aa).

The helical transmembrane segment at 6–26 (NSLSVLIVGAGLGGLAAAIAL) threads the bilayer. Positions 50, 108, and 318 each coordinate FAD.

This sequence belongs to the paxM FAD-dependent monooxygenase family. In terms of assembly, monomer. It depends on FAD as a cofactor.

It is found in the membrane. The catalysed reaction is hispidin + NADH + O2 + H(+) = 3-hydroxyhispidin + NAD(+) + H2O. The enzyme catalyses hispidin + NADPH + O2 + H(+) = 3-hydroxyhispidin + NADP(+) + H2O. It participates in secondary metabolite biosynthesis. Functionally, hispidin-3-hydroxylase; part of the gene cluster that mediates the fungal bioluminescence cycle. Hydroxylates hispidin in order to produce the fungal luciferin 3-hydroxyhispidin. The fungal bioluminescence cycle begins with the hispidin synthetase that catalyzes the formation of hispidin which is further hydroxylated by the hispidin-3-hydroxylase, yielding the fungal luciferin 3-hydroxyhispidin. The luciferase then produces an endoperoxide as a high-energy intermediate with decomposition that yields oxyluciferin (also known as caffeoylpyruvate) and light emission. Oxyluciferin can be recycled to caffeic acid by caffeoylpyruvate hydrolase. The chain is Hispidin-3-hydroxylase from Neonothopanus nambi (Agaricus nambi).